Consider the following 246-residue polypeptide: UDP-N-acetyl-D-mannosaminuronic acid transferase (246 aa).

It belongs to the glycosyltransferase 26 family.

The catalysed reaction is UDP-N-acetyl-alpha-D-mannosaminouronate + N-acetyl-alpha-D-glucosaminyl-di-trans,octa-cis-undecaprenyl diphosphate = beta-D-ManNAcA-(1-&gt;4)-alpha-D-GlcNAc-di-trans,octa-cis-undecaprenyl diphosphate + UDP + H(+). It participates in bacterial outer membrane biogenesis; enterobacterial common antigen biosynthesis. In terms of biological role, catalyzes the synthesis of Und-PP-GlcNAc-ManNAcA (Lipid II), the second lipid-linked intermediate involved in enterobacterial common antigen (ECA) synthesis. In Escherichia coli O7:K1 (strain IAI39 / ExPEC), this protein is UDP-N-acetyl-D-mannosaminuronic acid transferase.